We begin with the raw amino-acid sequence, 394 residues long: Bone morphogenetic protein 2 (394 aa).

The signal sequence occupies residues 1 to 19 (MVAGTRCLLVLLLPQVLLG). The propeptide at 20-280 (GAAGLIPELG…GHPLHKREKR (261 aa)) is cleaved by PCSK5. Residue Ser86 is modified to Phosphoserine. 3 N-linked (GlcNAc...) asparagine glycosylation sites follow: Asn134, Asn162, and Asn198. Residues 269 to 291 (GKGHPLHKREKRQAKHKQRKRLK) form a disordered region. Residues 272–291 (HPLHKREKRQAKHKQRKRLK) are compositionally biased toward basic residues. Intrachain disulfides connect Cys294-Cys359, Cys323-Cys391, and Cys327-Cys393. N-linked (GlcNAc...) asparagine glycosylation occurs at Asn336.

The protein belongs to the TGF-beta family. As to quaternary structure, homodimer; disulfide-linked. Interacts with SOSTDC1. Interacts with GREM2, RGMA, RGMB and RGMC. Interacts with ASPN. Interacts with MAFP5. Interacts with FBN1 (via N-terminal domain) and FBN2. Interacts with type I receptor BMPR1A. Interacts with type II receptor BMPR2. Interacts with SCUBE3. Interacts with TNFAIP6 (primarily via Link domain); this interaction is inhibited by hyaluronan. Interacts with ERFE. Interacts with BMPR1A/ALK3; the interaction may induce HAMP expression. Forms heterodimers with BMP6 in vitro; the heterodimer then binds to its receptor BMPR1A /ALK3 and may induce HAMP expression. Interacts with TGFBR3.

The protein localises to the secreted. Growth factor of the TGF-beta superfamily that plays essential roles in many developmental processes, including cardiogenesis, neurogenesis, and osteogenesis. Induces cartilage and bone formation. Initiates the canonical BMP signaling cascade by associating with type I receptor BMPR1A and type II receptor BMPR2. Once all three components are bound together in a complex at the cell surface, BMPR2 phosphorylates and activates BMPR1A. In turn, BMPR1A propagates signal by phosphorylating SMAD1/5/8 that travel to the nucleus and act as activators and repressors of transcription of target genes. Also acts to promote expression of HAMP, via the interaction with its receptor BMPR1A/ALK3. Can also signal through non-canonical pathways such as ERK/MAP kinase signaling cascade that regulates osteoblast differentiation. Also stimulates the differentiation of myoblasts into osteoblasts via the EIF2AK3-EIF2A-ATF4 pathway by stimulating EIF2A phosphorylation which leads to increased expression of ATF4 which plays a central role in osteoblast differentiation. Acts as a positive regulator of odontoblast differentiation during mesenchymal tooth germ formation, expression is repressed during the bell stage by MSX1-mediated inhibition of CTNNB1 signaling. This chain is Bone morphogenetic protein 2 (Bmp2), found in Mus musculus (Mouse).